A 101-amino-acid polypeptide reads, in one-letter code: MKFKYLSTPLLFSALLFSACSSVNVGANLKSLIKETTDQDLDLSESVSTSEGKKNLISSLKKSYETNPSKTASVLLNAWKQSVENGQIESSETNWTNWKFP.

Positions 1–19 (MKFKYLSTPLLFSALLFSA) are cleaved as a signal peptide. Cys-20 is lipidated: N-palmitoyl cysteine. Cys-20 carries S-diacylglycerol cysteine lipidation.

The protein belongs to the MG439/MG440 family.

It is found in the cell membrane. This is an uncharacterized protein from Mycoplasma pneumoniae (strain ATCC 29342 / M129 / Subtype 1) (Mycoplasmoides pneumoniae).